The sequence spans 86 residues: Probable oxaloacetate decarboxylase gamma chain 1 (86 aa).

A helical membrane pass occupies residues 11-33 (AATLMVTGMAVVFLFLTLLVYLV).

Belongs to the OadG family. As to quaternary structure, heterotrimer of an alpha, a beta and a gamma subunit. It depends on Na(+) as a cofactor.

The protein localises to the cell membrane. The catalysed reaction is oxaloacetate + 2 Na(+)(in) + H(+) = pyruvate + 2 Na(+)(out) + CO2. Functionally, catalyzes the decarboxylation of oxaloacetate coupled to Na(+) translocation. In Vibrio cholerae serotype O1 (strain ATCC 39315 / El Tor Inaba N16961), this protein is Probable oxaloacetate decarboxylase gamma chain 1 (oadG1).